The sequence spans 361 residues: UDP-3-O-acylglucosamine N-acyltransferase (361 aa).

The active-site Proton acceptor is histidine 253.

It belongs to the transferase hexapeptide repeat family. LpxD subfamily. As to quaternary structure, homotrimer.

The enzyme catalyses a UDP-3-O-[(3R)-3-hydroxyacyl]-alpha-D-glucosamine + a (3R)-hydroxyacyl-[ACP] = a UDP-2-N,3-O-bis[(3R)-3-hydroxyacyl]-alpha-D-glucosamine + holo-[ACP] + H(+). It functions in the pathway bacterial outer membrane biogenesis; LPS lipid A biosynthesis. Its function is as follows. Catalyzes the N-acylation of UDP-3-O-acylglucosamine using 3-hydroxyacyl-ACP as the acyl donor. Is involved in the biosynthesis of lipid A, a phosphorylated glycolipid that anchors the lipopolysaccharide to the outer membrane of the cell. The polypeptide is UDP-3-O-acylglucosamine N-acyltransferase (Burkholderia mallei (strain ATCC 23344)).